The following is a 246-amino-acid chain: Major prion protein (246 aa).

The N-terminal stretch at 1 to 15 is a signal peptide; that stretch reads MLVLFVATWSDLGLC. Positions 16 to 223 are interaction with GRB2, ERI3 and SYN1; that stretch reads KKRPKPGGWN…ESQAYYQRGS (208 aa). Residues 18 to 102 form a disordered region; the sequence is RPKPGGWNTG…HKPSKPKTSM (85 aa). A run of 5 repeats spans residues 44–52, 53–60, 61–68, 69–76, and 77–84. Residues 44-84 are 5 X 8 AA tandem repeats of P-H-G-G-G-W-G-Q; sequence PQGGGGWGQPHGGGWGQPHGGGWGQPHGGGWGQPHGGGWGQ. Residues 45–88 are compositionally biased toward gly residues; sequence QGGGGWGQPHGGGWGQPHGGGWGQPHGGGWGQPHGGGWGQGGGT. 12 residues coordinate Cu(2+): histidine 54, glycine 55, glycine 56, histidine 62, glycine 63, glycine 64, histidine 70, glycine 71, glycine 72, histidine 78, glycine 79, and glycine 80. The span at 91–102 shows a compositional bias: basic residues; it reads QWHKPSKPKTSM. Residues cysteine 172 and cysteine 207 are joined by a disulfide bond. 2 N-linked (GlcNAc...) asparagine glycosylation sites follow: asparagine 174 and asparagine 190. Serine 223 carries GPI-anchor amidated serine lipidation. The propeptide at 224–246 is removed in mature form; that stretch reads SMVLFSSPPVILLISFLIFLIVG.

Belongs to the prion family. In terms of assembly, monomer and homodimer. Has a tendency to aggregate into amyloid fibrils containing a cross-beta spine, formed by a steric zipper of superposed beta-strands. Soluble oligomers may represent an intermediate stage on the path to fibril formation. Copper binding may promote oligomerization. Interacts with GRB2, APP, ERI3/PRNPIP and SYN1. Mislocalized cytosolically exposed PrP interacts with MGRN1; this interaction alters MGRN1 subcellular location and causes lysosomal enlargement. Interacts with KIAA1191.

Its subcellular location is the cell membrane. The protein resides in the golgi apparatus. Functionally, its primary physiological function is unclear. Has cytoprotective activity against internal or environmental stresses. May play a role in neuronal development and synaptic plasticity. May be required for neuronal myelin sheath maintenance. May play a role in iron uptake and iron homeostasis. Soluble oligomers are toxic to cultured neuroblastoma cells and induce apoptosis (in vitro). Association with GPC1 (via its heparan sulfate chains) targets PRNP to lipid rafts. Also provides Cu(2+) or Zn(2+) for the ascorbate-mediated GPC1 deaminase degradation of its heparan sulfate side chains. The sequence is that of Major prion protein (PRNP) from Cercocebus atys (Sooty mangabey).